A 744-amino-acid polypeptide reads, in one-letter code: Prestin (744 aa).

At 1–75 the chain is on the cytoplasmic side; the sequence is MDHAEENEIP…PITKWLPAYK (75 aa). The chain crosses the membrane as a helical span at residues 76-105; that stretch reads FKEYVLGDLVSGISTGVLQLPQGLAFAMLA. The Extracellular portion of the chain corresponds to 106 to 108; it reads AVP. A helical transmembrane segment spans residues 109–126; sequence PVFGLYSSFYPVIMYCFF. The Cytoplasmic portion of the chain corresponds to 127–137; the sequence is GTSRHISIGPF. Residues 138–151 form a helical membrane-spanning segment; the sequence is AVISLMIGGVAVRL. Topologically, residues 152 to 168 are extracellular; the sequence is VPDDIVIPGGVNATNGT. The short motif at 158–168 is the Involved in motor function element; the sequence is IPGGVNATNGT. N-linked (GlcNAc...) asparagine glycosylation is found at asparagine 163 and asparagine 166. Residues 169–196 traverse the membrane as a helical segment; the sequence is EARDALRVKVAMSVTLLSGIIQFCLGVC. The Cytoplasmic segment spans residues 197–206; it reads RFGFVAIYLT. Residues 207–230 traverse the membrane as a helical segment; that stretch reads EPLVRGFTTAAAVHVFTSMLKYLF. At 231-241 the chain is on the extracellular side; it reads GVKTKRYSGIF. The segment at residues 242-253 is an intramembrane region (helical); the sequence is SVVYSTVAVLQN. At 254–258 the chain is on the extracellular side; sequence VKNLN. A helical membrane pass occupies residues 259-282; it reads VCSLGVGLMVFGLLLGGKEFNERF. Topologically, residues 283 to 291 are cytoplasmic; that stretch reads KEKLPAPIP. A helical membrane pass occupies residues 292 to 307; the sequence is LEFFAVVMGTGISAGF. The Extracellular segment spans residues 308–332; it reads NLHESYSVDVVGTLPLGLLPPANPD. A helical transmembrane segment spans residues 333 to 367; sequence TSLFHLVYVDAIAIAIVGFSVTISMAKTLANKHGY. The Cytoplasmic portion of the chain corresponds to 368-370; it reads QVD. A helical membrane pass occupies residues 371-388; it reads GNQELIALGICNSIGSLF. Residues 389–396 are Extracellular-facing; sequence QTFSISCS. A helical membrane pass occupies residues 397 to 406; it reads LSRSLVQEGT. Residue serine 398 coordinates salicylate. Topologically, residues 407-410 are cytoplasmic; the sequence is GGKT. A helical membrane pass occupies residues 411–432; that stretch reads QLAGCLASLMILLVILATGFLF. Residues 433-436 are Extracellular-facing; sequence ESLP. Residues 437–464 traverse the membrane as a helical segment; sequence QAVLSAIVIVNLKGMFMQFSDLPFFWRT. A topological domain (cytoplasmic) is located at residue serine 465. Residues 466 to 481 traverse the membrane as a helical segment; sequence KIELTIWLTTFVSSLF. Over 482–483 the chain is Extracellular; the sequence is LG. The helical transmembrane segment at 484 to 504 threads the bilayer; sequence LDYGLITAVIIALLTVIYRTQ. An extended region for STAS domain region spans residues 505-718; it reads SPSYKVLGQL…AVLGSQVREA (214 aa). At 505 to 744 the chain is on the cytoplasmic side; the sequence is SPSYKVLGQL…PNATPTTPEA (240 aa). The STAS domain occupies 525 to 713; sequence AYEEVKEIPG…HSIHDAVLGS (189 aa). Positions 720–744 are disordered; it reads AEQEATASLPQEDMEPNATPTTPEA.

Belongs to the SLC26A/SulP transporter (TC 2.A.53) family. As to quaternary structure, homodimer. Interacts (via STAS domain) with CALM; this interaction is calcium-dependent and the STAS domain interacts with only one lobe of CALM which is an elongated conformation. Interacts with MYH1. Expressed in the outer hair cells (OHC) of the organ of Corti of the inner ear. Also weak expression in brain and testis. Very weakly expressed in heart, spleen, muscle and lactating mammary glands. Expressed in cardiac myocytes (at protein level), both in the surface sarcolemma and along the t-tubule. Weakly expressed in skeletal muscle cells (at protein level).

It localises to the lateral cell membrane. It carries out the reaction 2 hydrogencarbonate(in) + chloride(out) = 2 hydrogencarbonate(out) + chloride(in). Functionally, voltage-sensitive motor protein that drives outer hair cell (OHC) electromotility (eM) and participates in sound amplification in the hearing organ. Converts changes in the transmembrane electric potential into mechanical displacements resulting in the coupling of its expansion to movement of a charged voltage sensor across the lipid membrane. The nature of the voltage sensor is not completely clear, and two models compete. In the first model, acts as an incomplete transporter where intracellular chloride anion acts as extrinsic voltage sensor that drives conformational change in the protein which is sufficient to produce a length change in the plane of the membrane and hence in the length of the OHC. The second model in which multiple charged amino acid residues are distributed at the intracellular and extracellular membrane interfaces that form an intrinsic voltage sensor, whose movement produces the non-linear capacitance (NLC). However, the effective voltage sensor may be the result of a hybrid voltage sensor, assembled from intrinsic charge (charged residues) and extrinsic charge (bound anion). Notably, binding of anions to the anion-binding pocket partially neutralizes the intrinsic positive charge rather than to form an electrically negative sensor, therefore remaining charge may serve as voltage sensor that, after depolarization, moves from down (expanded state) to up (contracted) conformation, which is accompanied by an eccentric contraction of the intermembrane cross-sectional area of the protein as well as a major increase in the hydrophobic thickness of the protein having as consequences the plasma membrane thickening and the cell contraction after membrane depolarization. The anion-binding pocket transits from the inward-open (Down) state, where it is exposed toward the intracellular solvent in the absence of anion, to the occluded (Up) state upon anion binding. Salicylate competes for the anion-binding site and inhibits the voltage-sensor movement, and therefore inhibits the charge transfer and electromotility by displacing Cl(-) from the anion-binding site and by preventing the structural transitions to the contracted state. In addition, can act as a weak Cl(-)/HCO3(-) antiporter across the cell membrane and so regulate the intracellular pH of the outer hair cells (OHCs), while firstly found as being unable to mediate electrogenic anion transport. Moreover, supports a role in cardiac mechanical amplification serving as an elastic element to enhance the actomyosin- based sarcomere contraction system. In Mus musculus (Mouse), this protein is Prestin.